A 122-amino-acid chain; its full sequence is Ribosome-binding factor A (122 aa).

The protein belongs to the RbfA family. Monomer. Binds 30S ribosomal subunits, but not 50S ribosomal subunits or 70S ribosomes.

It is found in the cytoplasm. One of several proteins that assist in the late maturation steps of the functional core of the 30S ribosomal subunit. Associates with free 30S ribosomal subunits (but not with 30S subunits that are part of 70S ribosomes or polysomes). Required for efficient processing of 16S rRNA. May interact with the 5'-terminal helix region of 16S rRNA. The sequence is that of Ribosome-binding factor A from Albidiferax ferrireducens (strain ATCC BAA-621 / DSM 15236 / T118) (Rhodoferax ferrireducens).